Here is a 211-residue protein sequence, read N- to C-terminus: Ceramide-1-phosphate transfer protein (211 aa).

Residues Asp-53, Lys-57, Arg-103, Arg-107, and His-147 each contribute to the an N-acylsphingoid base 1-phosphate site.

This sequence belongs to the GLTP family.

It localises to the cytoplasm. The protein resides in the cytosol. The protein localises to the golgi apparatus. Its subcellular location is the trans-Golgi network membrane. It is found in the cell membrane. It localises to the endosome membrane. The protein resides in the nucleus outer membrane. The catalysed reaction is N-(hexadecanoyl)-sphing-4-enine-1-phosphate(in) = N-(hexadecanoyl)-sphing-4-enine-1-phosphate(out). It carries out the reaction N-(9Z-octadecenoyl)-sphing-4-enine-1-phosphate(in) = N-(9Z-octadecenoyl)-sphing-4-enine-1-phosphate(out). Functionally, mediates the intracellular transfer of ceramide-1-phosphate (C1P) between organelle membranes and the cell membrane. Required for normal structure of the Golgi stacks. Can bind phosphoceramides with a variety of aliphatic chains, but has a preference for lipids with saturated C16:0 or monounsaturated C18:1 aliphatic chains, and is inefficient with phosphoceramides containing lignoceryl (C24:0). Plays a role in the regulation of the cellular levels of ceramide-1-phosphate, and thereby contributes to the regulation of phospholipase PLA2G4A activity and the release of arachidonic acid. Has no activity with galactosylceramide, lactosylceramide, sphingomyelin, phosphatidylcholine, phosphatidic acid and ceramide. C1P transfer is stimulated by phosphatidylserine in C1P source vesicles. Regulates autophagy and pyroptosis, but not apoptosis. This Danio rerio (Zebrafish) protein is Ceramide-1-phosphate transfer protein (cptp).